Here is a 375-residue protein sequence, read N- to C-terminus: Meiotic driver cw27 (375 aa).

Disordered regions lie at residues 1 to 42 (MKNK…STLP) and 74 to 103 (DYDE…GTTD). Residues 11-29 (SMDELSTKNDNEIDLEKGP) show a composition bias toward basic and acidic residues. Transmembrane regions (helical) follow at residues 108 to 128 (FLIK…PAVC), 145 to 165 (WTLI…SWCF), 172 to 192 (AVKV…ISLA), 208 to 228 (EMMI…FGCV), 245 to 265 (TISA…WTLW), 272 to 292 (LQVL…MSLF), and 336 to 356 (VIGF…NAIG).

Belongs to the WTF family. Homomer. Forms protein aggregates. The two isoforms can interact with each other and with themselves. High sequence similarity is required for their interaction.

It localises to the spore membrane. It is found in the vacuole. Its subcellular location is the membrane. The protein localises to the ascus epiplasm. The protein resides in the cytoplasm. It localises to the endoplasmic reticulum. In terms of biological role, promotes unequal transmission of alleles from the parental zygote to progeny spores by acting as poison/antidote system where the poison and antidote proteins are produced from the same locus; the poison component is trans-acting and targets all spores within an ascus whereas the antidote component is spore-specific, leading to poisoning of all progeny that do not inherit the allele. Its function is as follows. Localizes isoform 2 to the vacuole thereby facilitating its degradation. Forms toxic aggregates that disrupt spore maturation. The polypeptide is Meiotic driver cw27 (Schizosaccharomyces pombe (Fission yeast)).